Consider the following 399-residue polypeptide: Dual-specificity RNA methyltransferase RlmN (399 aa).

Glu-122 (proton acceptor) is an active-site residue. In terms of domain architecture, Radical SAM core spans 128–371 (ETDRGTLCVS…VRTPRGRDIL (244 aa)). A disulfide bridge links Cys-135 with Cys-374. 3 residues coordinate [4Fe-4S] cluster: Cys-142, Cys-146, and Cys-149. Residues 200–201 (GE), Ser-232, 254–256 (SLH), and Asn-331 each bind S-adenosyl-L-methionine. The active-site S-methylcysteine intermediate is Cys-374.

It belongs to the radical SAM superfamily. RlmN family. It depends on [4Fe-4S] cluster as a cofactor.

The protein localises to the cytoplasm. The catalysed reaction is adenosine(2503) in 23S rRNA + 2 reduced [2Fe-2S]-[ferredoxin] + 2 S-adenosyl-L-methionine = 2-methyladenosine(2503) in 23S rRNA + 5'-deoxyadenosine + L-methionine + 2 oxidized [2Fe-2S]-[ferredoxin] + S-adenosyl-L-homocysteine. The enzyme catalyses adenosine(37) in tRNA + 2 reduced [2Fe-2S]-[ferredoxin] + 2 S-adenosyl-L-methionine = 2-methyladenosine(37) in tRNA + 5'-deoxyadenosine + L-methionine + 2 oxidized [2Fe-2S]-[ferredoxin] + S-adenosyl-L-homocysteine. Specifically methylates position 2 of adenine 2503 in 23S rRNA and position 2 of adenine 37 in tRNAs. m2A2503 modification seems to play a crucial role in the proofreading step occurring at the peptidyl transferase center and thus would serve to optimize ribosomal fidelity. This is Dual-specificity RNA methyltransferase RlmN from Rhodopseudomonas palustris (strain BisB18).